A 350-amino-acid polypeptide reads, in one-letter code: Lipase chaperone (350 aa).

A helical transmembrane segment spans residues 12-32 (IVLYLILGCVVVCGVWYSFDV).

It belongs to the lipase chaperone family.

The protein resides in the cell inner membrane. Its function is as follows. May be involved in the folding of the extracellular lipase during its passage through the periplasm. The polypeptide is Lipase chaperone (lifO) (Xylella fastidiosa (strain 9a5c)).